Consider the following 470-residue polypeptide: Cysteine--tRNA ligase (470 aa).

Cysteine 28 provides a ligand contact to Zn(2+). A 'HIGH' region motif is present at residues 30 to 40; that stretch reads PTVYNYIHIGN. Zn(2+)-binding residues include cysteine 212, histidine 237, and glutamate 241. Positions 271–275 match the 'KMSKS' region motif; sequence KMSKS. Lysine 274 provides a ligand contact to ATP.

It belongs to the class-I aminoacyl-tRNA synthetase family. In terms of assembly, monomer. Zn(2+) is required as a cofactor.

The protein resides in the cytoplasm. The catalysed reaction is tRNA(Cys) + L-cysteine + ATP = L-cysteinyl-tRNA(Cys) + AMP + diphosphate. This Ligilactobacillus salivarius (strain UCC118) (Lactobacillus salivarius) protein is Cysteine--tRNA ligase.